The primary structure comprises 282 residues: Phosphoglucan phosphatase LSF2, chloroplastic (282 aa).

The N-terminal 61 residues, 1–61 (MSVIGSKSCI…GENPGTNGVS (61 aa)), are a transit peptide targeting the chloroplast. Substrate contacts are provided by residues Tyr-83, 153–156 (RHMR), Asp-161, and 177–180 (SLEW). One can recognise a Tyrosine-protein phosphatase domain in the interval 92 to 249 (NYTLIRDELI…TYDLAKNDPW (158 aa)). Residue Cys-193 is the Phosphocysteine intermediate of the active site. The Glucan phosphatase signature motif CXAGXGR motif lies at 193–199 (CSAGLGR). Substrate is bound by residues 194–199 (SAGLGR), Gly-230, Lys-245, Glu-251, 259–263 (NAFED), and Glu-268.

In terms of tissue distribution, widely expressed.

It localises to the plastid. The protein localises to the chloroplast. Functionally, starch-associated phosphoglucan phosphatase that selectively dephosphorylates the glucan C3 position. Probably participates in the regulation of starch degradation. This chain is Phosphoglucan phosphatase LSF2, chloroplastic (LSF2), found in Arabidopsis thaliana (Mouse-ear cress).